The primary structure comprises 475 residues: Protein translocase subunit SecD (475 aa).

Helical transmembrane passes span 7–27, 313–333, 338–358, 364–384, 410–430, and 437–457; these read LLIT…SLKF, KGFM…FIYY, LIAD…MAYL, LPGV…NVLI, FWTI…LFQF, and GFAV…VTVT.

The protein belongs to the SecD/SecF family. SecD subfamily. As to quaternary structure, forms a complex with SecF. Part of the essential Sec protein translocation apparatus which comprises SecA, SecYEG and auxiliary proteins SecDF. Other proteins may also be involved.

It is found in the cell inner membrane. Functionally, part of the Sec protein translocase complex. Interacts with the SecYEG preprotein conducting channel. SecDF uses the proton motive force (PMF) to complete protein translocation after the ATP-dependent function of SecA. This is Protein translocase subunit SecD from Endomicrobium trichonymphae.